Consider the following 141-residue polypeptide: Nucleoside triphosphatase NudI (141 aa).

One can recognise a Nudix hydrolase domain in the interval 1–141 (MRQRTIVCPL…RHTLRLKGLL (141 aa)). Residues 38–59 (GGVEPGERIEEALRREIREELG) carry the Nudix box motif.

Belongs to the Nudix hydrolase family. NudI subfamily. In terms of assembly, monomer. It depends on Mg(2+) as a cofactor.

The catalysed reaction is a ribonucleoside 5'-triphosphate + H2O = a ribonucleoside 5'-phosphate + diphosphate + H(+). It catalyses the reaction a 2'-deoxyribonucleoside 5'-triphosphate + H2O = a 2'-deoxyribonucleoside 5'-phosphate + diphosphate + H(+). The enzyme catalyses dUTP + H2O = dUMP + diphosphate + H(+). It carries out the reaction dTTP + H2O = dTMP + diphosphate + H(+). The catalysed reaction is dCTP + H2O = dCMP + diphosphate + H(+). In terms of biological role, catalyzes the hydrolysis of nucleoside triphosphates, with a preference for pyrimidine deoxynucleoside triphosphates (dUTP, dTTP and dCTP). The protein is Nucleoside triphosphatase NudI of Salmonella arizonae (strain ATCC BAA-731 / CDC346-86 / RSK2980).